The following is a 73-amino-acid chain: MSSSFFKKRLSPIKPGDPIDYKDVDLLKKFITDRGKILPRRLTGLTSKQQRDLTNAVKRARIIALLPFVNPEG.

It belongs to the bacterial ribosomal protein bS18 family. As to quaternary structure, part of the 30S ribosomal subunit. Forms a tight heterodimer with protein bS6.

Functionally, binds as a heterodimer with protein bS6 to the central domain of the 16S rRNA, where it helps stabilize the platform of the 30S subunit. This is Small ribosomal subunit protein bS18 from Prochlorococcus marinus (strain MIT 9313).